A 293-amino-acid chain; its full sequence is Elongation factor Ts (293 aa).

The segment at 80-83 (TDFV) is involved in Mg(2+) ion dislocation from EF-Tu.

This sequence belongs to the EF-Ts family.

The protein resides in the cytoplasm. Associates with the EF-Tu.GDP complex and induces the exchange of GDP to GTP. It remains bound to the aminoacyl-tRNA.EF-Tu.GTP complex up to the GTP hydrolysis stage on the ribosome. The chain is Elongation factor Ts from Staphylococcus aureus (strain Mu3 / ATCC 700698).